A 602-amino-acid chain; its full sequence is Translation initiation factor IF-2 (602 aa).

The tr-type G domain maps to 112–281; that stretch reads KRAPIITIMG…LLLCEVLDLK (170 aa). The segment at 121–128 is G1; sequence GHVDHGKT. 121–128 provides a ligand contact to GTP; that stretch reads GHVDHGKT. The tract at residues 146–150 is G2; it reads GITQH. A G3 region spans residues 167-170; sequence DTPG. Residues 167–171 and 221–224 contribute to the GTP site; these read DTPGH and NKMD. The tract at residues 221-224 is G4; it reads NKMD. The tract at residues 257 to 259 is G5; that stretch reads SAL.

It belongs to the TRAFAC class translation factor GTPase superfamily. Classic translation factor GTPase family. IF-2 subfamily.

It localises to the cytoplasm. Functionally, one of the essential components for the initiation of protein synthesis. Protects formylmethionyl-tRNA from spontaneous hydrolysis and promotes its binding to the 30S ribosomal subunits. Also involved in the hydrolysis of GTP during the formation of the 70S ribosomal complex. The polypeptide is Translation initiation factor IF-2 (Mycoplasmopsis synoviae (strain 53) (Mycoplasma synoviae)).